A 326-amino-acid polypeptide reads, in one-letter code: Probable pectate lyase B (326 aa).

A signal peptide spans 1–15 (MRVTAILTLATIAIA). Positions 133, 162, and 166 each coordinate Ca(2+). The active site involves R219.

This sequence belongs to the polysaccharide lyase 1 family. The cofactor is Ca(2+).

It localises to the secreted. The catalysed reaction is Eliminative cleavage of (1-&gt;4)-alpha-D-galacturonan to give oligosaccharides with 4-deoxy-alpha-D-galact-4-enuronosyl groups at their non-reducing ends.. Its function is as follows. Pectinolytic enzyme consist of four classes of enzymes: pectin lyase, polygalacturonase, pectin methylesterase and rhamnogalacturonase. Among pectinolytic enzymes, pectin lyase is the most important in depolymerization of pectin, since it cleaves internal glycosidic bonds of highly methylated pectins. Favors pectate, the anion, over pectin, the methyl ester. This is Probable pectate lyase B (plyB) from Aspergillus flavus (strain ATCC 200026 / FGSC A1120 / IAM 13836 / NRRL 3357 / JCM 12722 / SRRC 167).